The primary structure comprises 121 residues: Large ribosomal subunit protein uL18 (121 aa).

The protein belongs to the universal ribosomal protein uL18 family. Part of the 50S ribosomal subunit; part of the 5S rRNA/L5/L18/L25 subcomplex. Contacts the 5S and 23S rRNAs.

Its function is as follows. This is one of the proteins that bind and probably mediate the attachment of the 5S RNA into the large ribosomal subunit, where it forms part of the central protuberance. The polypeptide is Large ribosomal subunit protein uL18 (Polaromonas naphthalenivorans (strain CJ2)).